A 449-amino-acid polypeptide reads, in one-letter code: Tryptophan synthase beta chain 2 (449 aa).

K116 is subject to N6-(pyridoxal phosphate)lysine.

It belongs to the TrpB family. Tetramer of two alpha and two beta chains. It depends on pyridoxal 5'-phosphate as a cofactor.

It catalyses the reaction (1S,2R)-1-C-(indol-3-yl)glycerol 3-phosphate + L-serine = D-glyceraldehyde 3-phosphate + L-tryptophan + H2O. Its pathway is amino-acid biosynthesis; L-tryptophan biosynthesis; L-tryptophan from chorismate: step 5/5. The beta subunit is responsible for the synthesis of L-tryptophan from indole and L-serine. The polypeptide is Tryptophan synthase beta chain 2 (trpB2) (Aeropyrum pernix (strain ATCC 700893 / DSM 11879 / JCM 9820 / NBRC 100138 / K1)).